We begin with the raw amino-acid sequence, 93 residues long: Small ribosomal subunit protein uS19c (93 aa).

It belongs to the universal ribosomal protein uS19 family.

It localises to the plastid. The protein resides in the chloroplast. Functionally, protein S19 forms a complex with S13 that binds strongly to the 16S ribosomal RNA. This chain is Small ribosomal subunit protein uS19c, found in Tetradesmus obliquus (Green alga).